The chain runs to 173 residues: Dual-action ribosomal maturation protein DarP (173 aa).

The protein belongs to the DarP family.

The protein localises to the cytoplasm. Functionally, member of a network of 50S ribosomal subunit biogenesis factors which assembles along the 30S-50S interface, preventing incorrect 23S rRNA structures from forming. Promotes peptidyl transferase center (PTC) maturation. The polypeptide is Dual-action ribosomal maturation protein DarP (Pseudomonas putida (strain ATCC 700007 / DSM 6899 / JCM 31910 / BCRC 17059 / LMG 24140 / F1)).